The primary structure comprises 389 residues: MSLTRKPLASHHRIVIKIGSALLVDRKSGLKKDWLDAICEDIAALKKNGADVQVVSSGAIALGRTVLGLPSGALKLEESQAAAAVGQIALARAWSESLSRHEIVAGQILLTLSDTEERRRYLNARATINQLLKIGAIPIINENDTVATTEIRYGDNDRLAARVATMTGADLLVLLSDIDGLYTAPPHLDPDAKFLETIADITPEIEAMAGGAASELSRGGMRTKIDAGKIATAAGCGMIIASGKTLNPLKAIENGARSSWFAPSGTPVTARKTWIAGQLQPAGEIHVDAGAEKALYAGKSLLPAGVRQVKGNFGRGDAIAIIGVEGREVARGLAGYDAEEARLIIGHKSNEIETILGYVGRAAMIHRDDLVMTGAAVKVKHAKKDEVHA.

Lysine 17 is a binding site for ATP. Residues serine 57, aspartate 144, and asparagine 156 each contribute to the substrate site. An ATP-binding site is contributed by 176 to 177; it reads SD. The region spanning 282-359 is the PUA domain; that stretch reads AGEIHVDAGA…NEIETILGYV (78 aa).

It belongs to the glutamate 5-kinase family.

Its subcellular location is the cytoplasm. It catalyses the reaction L-glutamate + ATP = L-glutamyl 5-phosphate + ADP. Its pathway is amino-acid biosynthesis; L-proline biosynthesis; L-glutamate 5-semialdehyde from L-glutamate: step 1/2. In terms of biological role, catalyzes the transfer of a phosphate group to glutamate to form L-glutamate 5-phosphate. The polypeptide is Glutamate 5-kinase (Agrobacterium fabrum (strain C58 / ATCC 33970) (Agrobacterium tumefaciens (strain C58))).